A 128-amino-acid chain; its full sequence is Large ribosomal subunit protein bL19 (128 aa).

It belongs to the bacterial ribosomal protein bL19 family.

In terms of biological role, this protein is located at the 30S-50S ribosomal subunit interface and may play a role in the structure and function of the aminoacyl-tRNA binding site. The polypeptide is Large ribosomal subunit protein bL19 (Mesoplasma florum (strain ATCC 33453 / NBRC 100688 / NCTC 11704 / L1) (Acholeplasma florum)).